Consider the following 101-residue polypeptide: MEPVDPNLEPWNHPGSQPKTACNNCYCKRCSYHCLVCFQTKGLGISYGRKKRRQRRSAPPSSEDHQNPIPKQPLPQTRGDQTGSEESKKKVESKTETDPFD.

The segment at 1 to 24 is interaction with human CREBBP; that stretch reads MEPVDPNLEPWNHPGSQPKTACNN. Residues 1–48 form a transactivation region; the sequence is MEPVDPNLEPWNHPGSQPKTACNNCYCKRCSYHCLVCFQTKGLGISYG. 3 residues coordinate Zn(2+): Cys-22, Cys-25, and Cys-27. The cysteine-rich stretch occupies residues 22–37; that stretch reads CNNCYCKRCSYHCLVC. An N6-acetyllysine; by host PCAF modification is found at Lys-28. Residues Cys-30, His-33, Cys-34, and Cys-37 each contribute to the Zn(2+) site. The segment at 38–48 is core; that stretch reads FQTKGLGISYG. Positions 47 to 101 are disordered; the sequence is YGRKKRRQRRSAPPSSEDHQNPIPKQPLPQTRGDQTGSEESKKKVESKTETDPFD. A Nuclear localization signal, RNA-binding (TAR), and protein transduction motif is present at residues 49 to 57; sequence RKKRRQRRS. The interaction with the host capping enzyme RNGTT stretch occupies residues 49–86; it reads RKKRRQRRSAPPSSEDHQNPIPKQPLPQTRGDQTGSEE. N6-acetyllysine; by host EP300 and GCN5L2 is present on residues Lys-50 and Lys-51. Asymmetric dimethylarginine; by host PRMT6 occurs at positions 52 and 53. Lys-71 is covalently cross-linked (Glycyl lysine isopeptide (Lys-Gly) (interchain with G-Cter in ubiquitin)). Positions 78–80 match the Cell attachment site motif; sequence RGD. Basic and acidic residues predominate over residues 85–101; it reads EESKKKVESKTETDPFD.

Belongs to the lentiviruses Tat family. Interacts with host CCNT1. Associates with the P-TEFb complex composed at least of Tat, P-TEFb (CDK9 and CCNT1), TAR RNA, RNA Pol II. Recruits the HATs CREBBP, TAF1/TFIID, EP300, PCAF and GCN5L2. Interacts with host KAT5/Tip60; this interaction targets the latter to degradation. Interacts with the host deacetylase SIRT1. Interacts with host capping enzyme RNGTT; this interaction stimulates RNGTT. Binds to host KDR, and to the host integrins ITGAV/ITGB3 and ITGA5/ITGB1. Interacts with host KPNB1/importin beta-1 without previous binding to KPNA1/importin alpha-1. Interacts with EIF2AK2. Interacts with host nucleosome assembly protein NAP1L1; this interaction may be required for the transport of Tat within the nucleus, since the two proteins interact at the nuclear rim. Interacts with host C1QBP/SF2P32; this interaction involves lysine-acetylated Tat. Interacts with the host chemokine receptors CCR2, CCR3 and CXCR4. Interacts with host DPP4/CD26; this interaction may trigger an anti-proliferative effect. Interacts with host LDLR. Interacts with the host extracellular matrix metalloproteinase MMP1. Interacts with host PRMT6; this interaction mediates Tat's methylation. Interacts with, and is ubiquitinated by MDM2/Hdm2. Interacts with host PSMC3 and HTATIP2. Interacts with STAB1; this interaction may overcome SATB1-mediated repression of IL2 and IL2RA (interleukin) in T cells by binding to the same domain than HDAC1. Interacts (when acetylated) with human CDK13, thereby increasing HIV-1 mRNA splicing and promoting the production of the doubly spliced HIV-1 protein Nef. Interacts with host TBP; this interaction modulates the activity of transcriptional pre-initiation complex. Interacts with host RELA. Interacts with host PLSCR1; this interaction negatively regulates Tat transactivation activity by altering its subcellular distribution. Asymmetrical arginine methylation by host PRMT6 seems to diminish the transactivation capacity of Tat and affects the interaction with host CCNT1. Post-translationally, acetylation by EP300, CREBBP, GCN5L2/GCN5 and PCAF regulates the transactivation activity of Tat. EP300-mediated acetylation of Lys-50 promotes dissociation of Tat from the TAR RNA through the competitive binding to PCAF's bromodomain. In addition, the non-acetylated Tat's N-terminus can also interact with PCAF. PCAF-mediated acetylation of Lys-28 enhances Tat's binding to CCNT1. Lys-50 is deacetylated by SIRT1. In terms of processing, polyubiquitination by host MDM2 does not target Tat to degradation, but activates its transactivation function and fosters interaction with CCNT1 and TAR RNA. Phosphorylated by EIF2AK2 on serine and threonine residues adjacent to the basic region important for TAR RNA binding and function. Phosphorylation of Tat by EIF2AK2 is dependent on the prior activation of EIF2AK2 by dsRNA.

The protein localises to the host nucleus. It localises to the host nucleolus. The protein resides in the host cytoplasm. Its subcellular location is the secreted. Its function is as follows. Transcriptional activator that increases RNA Pol II processivity, thereby increasing the level of full-length viral transcripts. Recognizes a hairpin structure at the 5'-LTR of the nascent viral mRNAs referred to as the transactivation responsive RNA element (TAR) and recruits the cyclin T1-CDK9 complex (P-TEFb complex) that will in turn hyperphosphorylate the RNA polymerase II to allow efficient elongation. The CDK9 component of P-TEFb and other Tat-activated kinases hyperphosphorylate the C-terminus of RNA Pol II that becomes stabilized and much more processive. Other factors such as HTATSF1/Tat-SF1, SUPT5H/SPT5, and HTATIP2 are also important for Tat's function. Besides its effect on RNA Pol II processivity, Tat induces chromatin remodeling of proviral genes by recruiting the histone acetyltransferases (HATs) CREBBP, EP300 and PCAF to the chromatin. This also contributes to the increase in proviral transcription rate, especially when the provirus integrates in transcriptionally silent region of the host genome. To ensure maximal activation of the LTR, Tat mediates nuclear translocation of NF-kappa-B by interacting with host RELA. Through its interaction with host TBP, Tat may also modulate transcription initiation. Tat can reactivate a latently infected cell by penetrating in it and transactivating its LTR promoter. In the cytoplasm, Tat is thought to act as a translational activator of HIV-1 mRNAs. In terms of biological role, extracellular circulating Tat can be endocytosed by surrounding uninfected cells via the binding to several surface receptors such as CD26, CXCR4, heparan sulfate proteoglycans (HSPG) or LDLR. Neurons are rarely infected, but they internalize Tat via their LDLR. Through its interaction with nuclear HATs, Tat is potentially able to control the acetylation-dependent cellular gene expression. Modulates the expression of many cellular genes involved in cell survival, proliferation or in coding for cytokines or cytokine receptors. Tat plays a role in T-cell and neurons apoptosis. Tat induced neurotoxicity and apoptosis probably contribute to neuroAIDS. Circulating Tat also acts as a chemokine-like and/or growth factor-like molecule that binds to specific receptors on the surface of the cells, affecting many cellular pathways. In the vascular system, Tat binds to ITGAV/ITGB3 and ITGA5/ITGB1 integrins dimers at the surface of endothelial cells and competes with bFGF for heparin-binding sites, leading to an excess of soluble bFGF. The polypeptide is Protein Tat (Human immunodeficiency virus type 1 group M subtype C (isolate 92BR025) (HIV-1)).